We begin with the raw amino-acid sequence, 40 residues long: Alpha-conotoxin GIC (40 aa).

Positions 1 to 20 (SDGRNDAAKAFDLISSTVKK) are excised as a propeptide. Intrachain disulfides connect Cys22/Cys28 and Cys23/Cys36. Positions 24 to 26 (SHP) are ser-Xaa-Pro motif, crucial for potent interaction with nAChR. At Cys36 the chain carries Cysteine amide.

As to expression, expressed by the venom duct.

It localises to the secreted. Alpha-conotoxins bind to the nicotinic acetylcholine receptors (nAChR) and inhibit them. This toxin reversibly blocks neuronal nAChRs (alpha-3/beta-2 = alpha-6 or -3/beta-2 or -3 &gt; alpha-3/beta-4 = alpha-4/beta-2). This Conus geographus (Geography cone) protein is Alpha-conotoxin GIC.